Reading from the N-terminus, the 4307-residue chain is Cytoplasmic dynein 2 heavy chain 1 (4307 aa).

The stem stretch occupies residues 1-1650 (MANGTADVRK…CVQMVDSEFQ (1650 aa)). Residue 145 to 152 (LGIVLRRS) participates in ATP binding. A coiled-coil region spans residues 1074-1103 (NTLDKSAKLIKEKKIEFDDLEVTRKKLVDD). AAA stretches follow at residues 1651–1875 (YTYE…VLRG), 1938–2161 (ELSA…KQND), 2251–2505 (ADDF…WVLG), and 2617–2863 (HYGR…ESCK). ATP contacts are provided by residues 1689 to 1696 (GPAGTGKT), 1979 to 1986 (GPSGAGKS), 2291 to 2298 (GPEGCGKG), and 2655 to 2662 (GRSGVGRR). The segment at 2881 to 3169 (AISSSKKKEL…AEVSKAQETI (289 aa)) is stalk. Coiled coils occupy residues 2897 to 2982 (LQAG…KEVQ), 3109 to 3200 (LETE…LATL), and 3408 to 3442 (IQHEKPDLEEQKTKLLQQEEDKKIQLAKLEESLLE). AAA regions lie at residues 3244-3473 (LCTE…LIQE) and 3690-3905 (MALF…IIDR).

The protein belongs to the dynein heavy chain family. The cytoplasmic dynein complex 2 is probably composed by a heavy chain DYNC2H1 homodimer and a number of DYNC2LI1 light intermediate chains.

It localises to the cytoplasm. Its subcellular location is the cytoskeleton. The protein resides in the cilium axoneme. It is found in the cell membrane. Its function is as follows. May function as a motor for intraflagellar retrograde transport. Functions in cilia biogenesis. May play a role in transport between endoplasmic reticulum and Golgi or organization of the Golgi in cells. The sequence is that of Cytoplasmic dynein 2 heavy chain 1 (DYNC2H1) from Homo sapiens (Human).